Reading from the N-terminus, the 421-residue chain is Myb-related protein Pp2 (421 aa).

HTH myb-type domains lie at 9 to 61 and 62 to 116; these read KVGL…TNYL and RPDL…KKRL. 2 DNA-binding regions (H-T-H motif) span residues 37-61 and 89-112; these read WRAI…TNYL and WSRI…NTRL. The segment at 119–240 is disordered; sequence QGLDPNTHLP…VTTKSHEDHR (122 aa). Acidic residues predominate over residues 136 to 147; the sequence is DTEDDTDDEGGD.

The protein resides in the nucleus. Possible transcription activator. This chain is Myb-related protein Pp2 (PP2), found in Physcomitrium patens (Spreading-leaved earth moss).